The chain runs to 358 residues: Serine/threonine-protein phosphatase 2A activator 2 (358 aa).

Interacts with the phosphatase PP2A catalytic subunits PPH21 and PPH22. Forms a ternary complex with PPH21-TAP42.

It is found in the cytoplasm. The catalysed reaction is [protein]-peptidylproline (omega=180) = [protein]-peptidylproline (omega=0). Functionally, PPIases accelerate the folding of proteins. It catalyzes the cis-trans isomerization of proline imidic peptide bonds in oligopeptides. Acts as a regulatory subunit for TAP42-associated PP2A-like phosphatases modulating their activity or substrate specificity, probably by inducing a conformational change in the catalytic subunit, a direct target of the PPIase. Can reactivate inactive phosphatase PP2A-phosphatase methylesterase complexes (PP2Ai) in presence of ATP and Mg(2+) by dissociating the inactive form from the complex. Acts also inhibitory at high concentrations. Involved in the regulation of cell cycle progression, mitotic spindle formation and bud morphogenesis. The protein is Serine/threonine-protein phosphatase 2A activator 2 (RRD2) of Saccharomyces cerevisiae (strain ATCC 204508 / S288c) (Baker's yeast).